A 616-amino-acid polypeptide reads, in one-letter code: Chaperone protein HscA homolog (616 aa).

Belongs to the heat shock protein 70 family.

Its function is as follows. Chaperone involved in the maturation of iron-sulfur cluster-containing proteins. Has a low intrinsic ATPase activity which is markedly stimulated by HscB. The protein is Chaperone protein HscA homolog of Vibrio cholerae serotype O1 (strain M66-2).